A 315-amino-acid polypeptide reads, in one-letter code: Jacalin-related lectin 10 (315 aa).

Positions 1 to 23 (MVIIYIFLFLSSAIIDSTGLAKA) are cleaved as a signal peptide. Jacalin-type lectin domains are found at residues 24 to 165 (QKLD…YLTT) and 168 to 312 (PTKS…YFSP).

Belongs to the jacalin lectin family.

The polypeptide is Jacalin-related lectin 10 (JAL10) (Arabidopsis thaliana (Mouse-ear cress)).